We begin with the raw amino-acid sequence, 397 residues long: ATP-dependent RNA helicase RhlB (397 aa).

Positions 8 to 36 (TRFHDFNLAPELMHAIQDLGFPYCTPIQA) match the Q motif motif. Positions 39–219 (LGFTLKGKDA…KQWTTDPSIV (181 aa)) constitute a Helicase ATP-binding domain. 52-59 (AQTGTGKT) contributes to the ATP binding site. The DEAD box motif lies at 165–168 (DEAD). The Helicase C-terminal domain maps to 242–392 (DKYKLLYNLV…TPPTHLLRAV (151 aa)).

The protein belongs to the DEAD box helicase family. RhlB subfamily. In terms of assembly, component of the RNA degradosome, which is a multiprotein complex involved in RNA processing and mRNA degradation.

It is found in the cytoplasm. It carries out the reaction ATP + H2O = ADP + phosphate + H(+). Functionally, DEAD-box RNA helicase involved in RNA degradation. Has RNA-dependent ATPase activity and unwinds double-stranded RNA. This chain is ATP-dependent RNA helicase RhlB, found in Pseudomonas syringae pv. tomato (strain ATCC BAA-871 / DC3000).